A 251-amino-acid polypeptide reads, in one-letter code: Small ribosomal subunit protein uS2 (251 aa).

A disordered region spans residues 232–251 (EAIAEMDEQVEEDAEEASND).

This sequence belongs to the universal ribosomal protein uS2 family.

This chain is Small ribosomal subunit protein uS2, found in Chlorobaculum parvum (strain DSM 263 / NCIMB 8327) (Chlorobium vibrioforme subsp. thiosulfatophilum).